The primary structure comprises 575 residues: Thiol:disulfide interchange protein DsbD (575 aa).

Positions 1-24 (MIKRTLMLFLLLCSPLLTPAAANA) are cleaved as a signal peptide. 2 disulfide bridges follow: cysteine 126–cysteine 132 and cysteine 192–cysteine 314. 8 helical membrane-spanning segments follow: residues 180–200 (AILI…YPLI), 216–236 (IFWL…LLGL), 253–273 (YVLI…FGLY), 297–317 (LFGV…CTTA), 336–356 (GLTL…VTLF), 367–387 (WMQY…VFLL), 394–414 (AWGI…GFVL), and 425–445 (VIQL…QDWF). A Thioredoxin domain is found at 444-575 (WFWGTTVTQQ…FNEHLQHLPK (132 aa)). Cysteine 490 and cysteine 493 are oxidised to a cystine.

The protein belongs to the thioredoxin family. DsbD subfamily.

The protein resides in the cell inner membrane. The catalysed reaction is [protein]-dithiol + NAD(+) = [protein]-disulfide + NADH + H(+). The enzyme catalyses [protein]-dithiol + NADP(+) = [protein]-disulfide + NADPH + H(+). Its function is as follows. Required to facilitate the formation of correct disulfide bonds in some periplasmic proteins and for the assembly of the periplasmic c-type cytochromes. Acts by transferring electrons from cytoplasmic thioredoxin to the periplasm. This transfer involves a cascade of disulfide bond formation and reduction steps. This Photorhabdus laumondii subsp. laumondii (strain DSM 15139 / CIP 105565 / TT01) (Photorhabdus luminescens subsp. laumondii) protein is Thiol:disulfide interchange protein DsbD.